The following is a 92-amino-acid chain: Small ribosomal subunit protein uS19 (92 aa).

The protein belongs to the universal ribosomal protein uS19 family.

Protein S19 forms a complex with S13 that binds strongly to the 16S ribosomal RNA. This chain is Small ribosomal subunit protein uS19, found in Rhodospirillum centenum (strain ATCC 51521 / SW).